The chain runs to 415 residues: Plant UBX domain-containing protein 16 (415 aa).

The UBA domain occupies 19-69; sequence QLDEEIVLFRQDQLISSFLEIAVDQTAETARILLQTTDWNIDQAVNLFLTN. The 81-residue stretch at 333–413 folds into the UBX domain; that stretch reads DRSVVCSLCV…GLANSLISVT (81 aa).

This is Plant UBX domain-containing protein 16 from Arabidopsis thaliana (Mouse-ear cress).